The following is a 286-amino-acid chain: MQNVGFIGWRGMVGSVLMDRMVQENDFANINPIFFTTSQAGQKAPVFAGKDAGELKNAFDIEELKKLDIIVTCQGGDYTNEVYPKLKATGWNGYWIDAASALRMEKDAIIVLDPVNQHVISEGLKNGIKTFVGGNCTVSLMLMAIGGLFEKDLVEWVSVATYQAASGAGAKNMRELLSQMGELEASVKAELANPASSILEIERKVTAKMREDSFPTDNFGAPLAGSLIPWIDKLLESGQTKEEWKGYAETNKILGLSDNPIPVDGLCVRIGALRCHSQAFTIKLKK.

NADP(+) contacts are provided by residues 10–13, 37–38, and Gln74; these read RGMV and TS. Arg103 is a phosphate binding site. Cys136 serves as the catalytic Acyl-thioester intermediate. Gln163 lines the substrate pocket. NADP(+)-binding positions include 166–167 and Pro194; that span reads SG. Residue Glu242 coordinates substrate. Lys245 lines the phosphate pocket. Residue Arg269 coordinates substrate. His276 (proton acceptor) is an active-site residue.

Belongs to the aspartate-semialdehyde dehydrogenase family. Homodimer.

It carries out the reaction L-aspartate 4-semialdehyde + phosphate + NADP(+) = 4-phospho-L-aspartate + NADPH + H(+). Its pathway is amino-acid biosynthesis; L-lysine biosynthesis via DAP pathway; (S)-tetrahydrodipicolinate from L-aspartate: step 2/4. The protein operates within amino-acid biosynthesis; L-methionine biosynthesis via de novo pathway; L-homoserine from L-aspartate: step 2/3. It participates in amino-acid biosynthesis; L-threonine biosynthesis; L-threonine from L-aspartate: step 2/5. Catalyzes the NADPH-dependent formation of L-aspartate-semialdehyde (L-ASA) by the reductive dephosphorylation of L-aspartyl-4-phosphate. In Actinobacillus pleuropneumoniae (Haemophilus pleuropneumoniae), this protein is Aspartate-semialdehyde dehydrogenase (asd).